The following is a 77-amino-acid chain: U8-lycotoxin-Ls1e (77 aa).

Positions Met1–Ala20 are cleaved as a signal peptide. Residues Gln21–Lys26 constitute a propeptide that is removed on maturation.

Belongs to the neurotoxin 19 (CSTX) family. 08 (U8-Lctx) subfamily. Contains 4 disulfide bonds. As to expression, expressed by the venom gland.

It localises to the secreted. The protein is U8-lycotoxin-Ls1e of Lycosa singoriensis (Wolf spider).